Here is a 784-residue protein sequence, read N- to C-terminus: Cadherin-5 (784 aa).

The N-terminal stretch at 1 to 24 (MQRLTELATALGAFLGLLAVAAMA) is a signal peptide. The propeptide occupies 25-45 (GPNFPQIDTPNMLPAHHRQKR). Cadherin domains are found at residues 46–149 (DWIW…WPVF), 150–256 (SHQV…FPVF), 257–371 (TQST…PPVF), 372–476 (QRHF…DNPP), and 477–593 (EFAQ…MAAQ). The Extracellular portion of the chain corresponds to 46–599 (DWIWNQMHID…MAAQAGVSIQ (554 aa)). Residues Glu-56 and Glu-57 each coordinate Ca(2+). Asn-59 carries an N-linked (GlcNAc...) asparagine glycan. Ca(2+) is bound by residues Asp-107, Glu-109, Asp-141, Ile-142, Asn-143, Asp-144, and Asn-145. A glycan (N-linked (GlcNAc...) asparagine) is linked at Asn-155. Residues Asp-175, Asp-177, His-184, and Asp-229 each contribute to the Ca(2+) site. Asn-441, Asn-523, and Asn-535 each carry an N-linked (GlcNAc...) asparagine glycan. The chain crosses the membrane as a helical span at residues 600 to 620 (ALVAIFLCILTITVITLLIIL). The tract at residues 621-660 (RRRIRKQAHAHSKSALEIHEQLVTYDEEGGGEMDTTSYDV) is required for interaction with PALS1. Topologically, residues 621–784 (RRRIRKQAHA…GSDPQEELII (164 aa)) are cytoplasmic.

Part of a complex composed of AMOTL2, MAGI1 and CDH5, within the complex AMOTL2 acts as a scaffold protein for the interaction of MAGI1 with CDH5. The complex is required for coupling actin fibers to cell junctions in endothelial cells. Within the complex AMOTL2 (via its N-terminus) interacts with CDH5. Interacts (via cadherin 5 domain) with PTPRB. Interacts with TRPC4. Interacts with KRIT1. Interacts with PARD3. Interacts with RTN4 (isoform B). Interacts with PALS1; the interaction promotes PALS1 localization to cell junctions and is required for CDH5-mediated vascular lumen formation and endothelial cell polarity. Interacts with CTNND1/p120-catenin; the interaction controls CADH5 endocytosis. In terms of processing, phosphorylated on tyrosine residues by KDR/VEGFR-2. Dephosphorylated by PTPRB. Post-translationally, O-glycosylated. As to expression, expressed in postnatal endothelial cells of the retinal vascular plexus (at protein level).

The protein localises to the cell junction. It localises to the adherens junction. The protein resides in the cell membrane. It is found in the cytoplasm. Its function is as follows. Cadherins are calcium-dependent cell adhesion proteins. They preferentially interact with themselves in a homophilic manner in connecting cells; cadherins may thus contribute to the sorting of heterogeneous cell types. This cadherin may play an important role in endothelial cell biology through control of the cohesion and organization of the intercellular junctions. It associates with alpha-catenin forming a link to the cytoskeleton. Plays a role in coupling actin fibers to cell junctions in endothelial cells, via acting as a cell junctional complex anchor for AMOTL2 and MAGI1. Acts in concert with KRIT1 and PALS1 to establish and maintain correct endothelial cell polarity and vascular lumen. These effects are mediated by recruitment and activation of the Par polarity complex and RAP1B. Required for activation of PRKCZ and for localization of phosphorylated PRKCZ, PARD3, TIAM1 and RAP1B to the cell junction. Associates with CTNND1/p120-catenin to control CADH5 endocytosis. The polypeptide is Cadherin-5 (Mus musculus (Mouse)).